A 325-amino-acid polypeptide reads, in one-letter code: Peroxidase 68 (325 aa).

A signal peptide spans 1–28 (MECYEQSRQRAAFVVLLFIVMLGSQAQA). Residue Gln-29 is modified to Pyrrolidone carboxylic acid. Cystine bridges form between Cys-39-Cys-119, Cys-72-Cys-77, Cys-125-Cys-321, and Cys-205-Cys-230. His-70 serves as the catalytic Proton acceptor. Ca(2+) contacts are provided by Asp-71, Val-74, Gly-76, Asp-78, and Ser-80. Residue Asn-99 is glycosylated (N-linked (GlcNAc...) asparagine). Substrate is bound at residue Pro-168. His-198 contributes to the heme b binding site. Thr-199 contributes to the Ca(2+) binding site. Residue Asn-214 is glycosylated (N-linked (GlcNAc...) asparagine). Positions 245, 248, and 253 each coordinate Ca(2+).

It belongs to the peroxidase family. Classical plant (class III) peroxidase subfamily. The cofactor is heme b. It depends on Ca(2+) as a cofactor.

It is found in the secreted. The enzyme catalyses 2 a phenolic donor + H2O2 = 2 a phenolic radical donor + 2 H2O. Its function is as follows. Removal of H(2)O(2), oxidation of toxic reductants, biosynthesis and degradation of lignin, suberization, auxin catabolism, response to environmental stresses such as wounding, pathogen attack and oxidative stress. These functions might be dependent on each isozyme/isoform in each plant tissue. In Arabidopsis thaliana (Mouse-ear cress), this protein is Peroxidase 68 (PER68).